We begin with the raw amino-acid sequence, 160 residues long: Protein-export protein SecB (160 aa).

Belongs to the SecB family. As to quaternary structure, homotetramer, a dimer of dimers. One homotetramer interacts with 1 SecA dimer.

It localises to the cytoplasm. Functionally, one of the proteins required for the normal export of preproteins out of the cell cytoplasm. It is a molecular chaperone that binds to a subset of precursor proteins, maintaining them in a translocation-competent state. It also specifically binds to its receptor SecA. In Burkholderia multivorans (strain ATCC 17616 / 249), this protein is Protein-export protein SecB.